The sequence spans 388 residues: Protein YnjB (388 aa).

The disordered stretch occupies residues 333–357 (AVWGDPSVLDPQKLPDGQRESLQSR).

The protein is Protein YnjB (ynjB) of Escherichia coli (strain K12).